Reading from the N-terminus, the 659-residue chain is UvrABC system protein B (659 aa).

Residues 27–414 (EGLEQNKKSQ…AHGEIVKQII (388 aa)) form the Helicase ATP-binding domain. 40–47 (GVTGSGKT) lines the ATP pocket. The Beta-hairpin motif lies at 93–116 (YFDYYRPEAYMPNTDTYIDKTTKS). A Helicase C-terminal domain is found at 432 to 594 (QVEDMFDEIQ…IIPKTIIKPI (163 aa)). The 36-residue stretch at 624–659 (EALVKDLRNQMLDASKQLNFERAAELRDIILELEAN) folds into the UVR domain.

The protein belongs to the UvrB family. As to quaternary structure, forms a heterotetramer with UvrA during the search for lesions. Interacts with UvrC in an incision complex.

It is found in the cytoplasm. In terms of biological role, the UvrABC repair system catalyzes the recognition and processing of DNA lesions. A damage recognition complex composed of 2 UvrA and 2 UvrB subunits scans DNA for abnormalities. Upon binding of the UvrA(2)B(2) complex to a putative damaged site, the DNA wraps around one UvrB monomer. DNA wrap is dependent on ATP binding by UvrB and probably causes local melting of the DNA helix, facilitating insertion of UvrB beta-hairpin between the DNA strands. Then UvrB probes one DNA strand for the presence of a lesion. If a lesion is found the UvrA subunits dissociate and the UvrB-DNA preincision complex is formed. This complex is subsequently bound by UvrC and the second UvrB is released. If no lesion is found, the DNA wraps around the other UvrB subunit that will check the other stand for damage. This Mycoplasma mobile (strain ATCC 43663 / 163K / NCTC 11711) (Mesomycoplasma mobile) protein is UvrABC system protein B.